The primary structure comprises 267 residues: U6 snRNA phosphodiesterase 1 (267 aa).

Over residues 1–13 (MSSAPLVGYSSSG) the composition is skewed to polar residues. The segment at 1–74 (MSSAPLVGYS…DSAKHGGRIR (74 aa)) is disordered. His122 (proton acceptor) is an active-site residue. 122–124 (HVS) is an AMP binding site. UMP contacts are provided by residues Gln166, Tyr204, and 208-212 (SFHIS). AMP contacts are provided by residues Tyr204 and 206–212 (DPSFHIS). Residue His210 is the Proton donor of the active site.

This sequence belongs to the 2H phosphoesterase superfamily. USB1 family. In terms of assembly, interacts with PLRG1, CDC5L and PRPF19.

The protein localises to the nucleus. It catalyses the reaction a 3'-end uridylyl-uridine-RNA = a 3'-end 2',3'-cyclophospho-uridine-RNA + uridine. It carries out the reaction a 3'-end uridylyl-adenosine-RNA = a 3'-end 2',3'-cyclophospho-uridine-RNA + adenosine. Its function is as follows. 3'-5' RNA exonuclease that trims the 3' end of oligo(U) and oligo(A) tracts of the pre-U6 small nuclear RNA (snRNA) molecule, leading to the formation of a mature U6 snRNA 3' end-terminated with a 2',3'-cyclic phosphate. Participates in the U6 snRNA 3' end processing that prevents U6 snRNA degradation. In addition also removes uridines from the 3' end of U6atac snRNA and possibly the vault RNA VTRNA1-1. The protein is U6 snRNA phosphodiesterase 1 of Mus musculus (Mouse).